Consider the following 119-residue polypeptide: Large ribosomal subunit protein bL20c (119 aa).

It belongs to the bacterial ribosomal protein bL20 family.

It localises to the plastid. Its subcellular location is the chloroplast. Its function is as follows. Binds directly to 23S ribosomal RNA and is necessary for the in vitro assembly process of the 50S ribosomal subunit. It is not involved in the protein synthesizing functions of that subunit. The polypeptide is Large ribosomal subunit protein bL20c (Triticum aestivum (Wheat)).